The sequence spans 162 residues: Cyclic pyranopterin monophosphate synthase (162 aa).

Residues 75–77 (LCH) and 113–114 (ME) contribute to the substrate site. Aspartate 128 is an active-site residue.

The protein belongs to the MoaC family. Homohexamer; trimer of dimers.

It carries out the reaction (8S)-3',8-cyclo-7,8-dihydroguanosine 5'-triphosphate = cyclic pyranopterin phosphate + diphosphate. It functions in the pathway cofactor biosynthesis; molybdopterin biosynthesis. Its function is as follows. Catalyzes the conversion of (8S)-3',8-cyclo-7,8-dihydroguanosine 5'-triphosphate to cyclic pyranopterin monophosphate (cPMP). This chain is Cyclic pyranopterin monophosphate synthase, found in Burkholderia ambifaria (strain ATCC BAA-244 / DSM 16087 / CCUG 44356 / LMG 19182 / AMMD) (Burkholderia cepacia (strain AMMD)).